Here is a 107-residue protein sequence, read N- to C-terminus: Large ribosomal subunit protein bL21c (107 aa).

Belongs to the bacterial ribosomal protein bL21 family. Part of the 50S ribosomal subunit.

It localises to the plastid. The protein resides in the chloroplast. This protein binds to 23S rRNA. The protein is Large ribosomal subunit protein bL21c of Cyanidioschyzon merolae (strain NIES-3377 / 10D) (Unicellular red alga).